Reading from the N-terminus, the 430-residue chain is Dihydroorotase (430 aa).

Zn(2+) is bound by residues His-60 and His-62. Substrate contacts are provided by residues 62-64 and Asn-94; that span reads HLR. The Zn(2+) site is built by Asp-152, His-179, His-232, and Asp-305. Asp-305 is a catalytic residue. Substrate contacts are provided by residues His-309 and 323-324; that span reads FG.

This sequence belongs to the metallo-dependent hydrolases superfamily. DHOase family. Class I DHOase subfamily. Zn(2+) serves as cofactor.

It catalyses the reaction (S)-dihydroorotate + H2O = N-carbamoyl-L-aspartate + H(+). It participates in pyrimidine metabolism; UMP biosynthesis via de novo pathway; (S)-dihydroorotate from bicarbonate: step 3/3. Its function is as follows. Catalyzes the reversible cyclization of carbamoyl aspartate to dihydroorotate. This Solibacter usitatus (strain Ellin6076) protein is Dihydroorotase.